The following is a 289-amino-acid chain: Transcriptional regulator Rob (289 aa).

Residues 8-106 form the HTH araC/xylS-type domain; that stretch reads RDLLIWLEGH…SQTPALYRRS (99 aa). 2 consecutive DNA-binding regions (H-T-H motif) follow at residues 25–46 and 73–96; these read DNVA…KDVT and ILDI…KKQF.

In terms of biological role, transcriptional regulator. Represses transcription of genes belonging to the flagellar regulon, including flhD, flhB and fliC; probably thereby leading to repression of motility. Binds to regulatory regions of target genes, including the promoters of the flhDC operon and of P-type ATPase mgtA. Involved in post-transcriptional regulation of expression. Represses expression of the flhDC operon in a post-transcriptional manner. Binds to the right arm of the replication origin oriC of the chromosome. Rob binding may influence the formation of the nucleoprotein structure, required for oriC function in the initiation of replication. In Salmonella typhimurium (strain LT2 / SGSC1412 / ATCC 700720), this protein is Transcriptional regulator Rob.